Consider the following 196-residue polypeptide: 3-isopropylmalate dehydratase small subunit (196 aa).

The protein belongs to the LeuD family. LeuD type 1 subfamily. As to quaternary structure, heterodimer of LeuC and LeuD.

It catalyses the reaction (2R,3S)-3-isopropylmalate = (2S)-2-isopropylmalate. The protein operates within amino-acid biosynthesis; L-leucine biosynthesis; L-leucine from 3-methyl-2-oxobutanoate: step 2/4. In terms of biological role, catalyzes the isomerization between 2-isopropylmalate and 3-isopropylmalate, via the formation of 2-isopropylmaleate. The chain is 3-isopropylmalate dehydratase small subunit from Rhodopirellula baltica (strain DSM 10527 / NCIMB 13988 / SH1).